The sequence spans 244 residues: Ribonuclease PH (244 aa).

Phosphate contacts are provided by residues Arg-90 and Gly-128–Arg-130.

This sequence belongs to the RNase PH family. Homohexameric ring arranged as a trimer of dimers.

It carries out the reaction tRNA(n+1) + phosphate = tRNA(n) + a ribonucleoside 5'-diphosphate. Functionally, phosphorolytic 3'-5' exoribonuclease that plays an important role in tRNA 3'-end maturation. Removes nucleotide residues following the 3'-CCA terminus of tRNAs; can also add nucleotides to the ends of RNA molecules by using nucleoside diphosphates as substrates, but this may not be physiologically important. Probably plays a role in initiation of 16S rRNA degradation (leading to ribosome degradation) during starvation. This Cutibacterium acnes (strain DSM 16379 / KPA171202) (Propionibacterium acnes) protein is Ribonuclease PH.